Consider the following 217-residue polypeptide: CXXC-type zinc finger protein 4 (217 aa).

The tract at residues 1–20 is disordered; sequence MHRNDSQRLGKPGGAPESLQ. A CXXC-type zinc finger spans residues 122–163; the sequence is AKKKRKRCGVCVPCKRLINCGVCSSCRNRKTGHQICKFRKCE. Residues C129, C132, C135, C141, C144, C147, C157, and C162 each coordinate Zn(2+).

The protein resides in the cytoplasm. Functionally, acts as a negative regulator of the Wnt signaling pathway required for anterior neural structure formation. Ectopic expression induces ventralization. Binds preferentially to DNA containing cytidine-phosphate-guanosine (CpG) dinucleotides over CpH (H=A, T, and C), hemimethylated-CpG and hemimethylated-hydroxymethyl-CpG. The sequence is that of CXXC-type zinc finger protein 4 (cxxc4) from Xenopus laevis (African clawed frog).